The chain runs to 379 residues: Chaperone protein DnaJ (379 aa).

One can recognise a J domain in the interval 6-71 (DYYEVLGVDK…QKRSRYDQFG (66 aa)). The CR-type zinc-finger motif lies at 138 to 220 (GVEREINVSK…CNGKGRLRST (83 aa)). Residues Cys-151, Cys-154, Cys-168, Cys-171, Cys-194, Cys-197, Cys-208, and Cys-211 each contribute to the Zn(2+) site. CXXCXGXG motif repeat units follow at residues 151–158 (CSKCTGSG), 168–175 (CNHCNGTG), 194–201 (CDACKGEG), and 208–215 (CPACNGKG).

It belongs to the DnaJ family. As to quaternary structure, homodimer. The cofactor is Zn(2+).

The protein resides in the cytoplasm. In terms of biological role, participates actively in the response to hyperosmotic and heat shock by preventing the aggregation of stress-denatured proteins and by disaggregating proteins, also in an autonomous, DnaK-independent fashion. Unfolded proteins bind initially to DnaJ; upon interaction with the DnaJ-bound protein, DnaK hydrolyzes its bound ATP, resulting in the formation of a stable complex. GrpE releases ADP from DnaK; ATP binding to DnaK triggers the release of the substrate protein, thus completing the reaction cycle. Several rounds of ATP-dependent interactions between DnaJ, DnaK and GrpE are required for fully efficient folding. Also involved, together with DnaK and GrpE, in the DNA replication of plasmids through activation of initiation proteins. This is Chaperone protein DnaJ from Ruminiclostridium cellulolyticum (strain ATCC 35319 / DSM 5812 / JCM 6584 / H10) (Clostridium cellulolyticum).